The following is a 153-amino-acid chain: MSALPPQPPPPLLLLLLALLAAPAALARRAESASASQPEAEHQPPPGPGNATQLGSGMAGGGSSNSSVDAVVTRISSLLRDLPTLKATVIVACAFSALLIACLLLRVFRLGKRLKKTRKYDIITTPAERVEMAPLNEEDDEDEDSTVFDIKYR.

The N-terminal stretch at 1 to 27 is a signal peptide; it reads MSALPPQPPPPLLLLLLALLAAPAALA. Over 28–84 the chain is Extracellular; it reads RRAESASASQPEAEHQPPPGPGNATQLGSGMAGGGSSNSSVDAVVTRISSLLRDLPT. The disordered stretch occupies residues 31-67; sequence ESASASQPEAEHQPPPGPGNATQLGSGMAGGGSSNSS. N50 is a glycosylation site (N-linked (GlcNAc...) asparagine). A helical membrane pass occupies residues 85 to 105; that stretch reads LKATVIVACAFSALLIACLLL. Topologically, residues 106–153 are cytoplasmic; the sequence is RVFRLGKRLKKTRKYDIITTPAERVEMAPLNEEDDEDEDSTVFDIKYR.

Belongs to the FAM174 family.

It is found in the cell membrane. The protein localises to the golgi apparatus. Its function is as follows. Essential for Golgi structural integrity. This chain is Membrane protein FAM174B (Fam174b), found in Mus musculus (Mouse).